Consider the following 256-residue polypeptide: Thiazole synthase (256 aa).

Catalysis depends on Lys96, which acts as the Schiff-base intermediate with DXP. Residues Gly157, 183–184 (AG), and 205–206 (NT) each bind 1-deoxy-D-xylulose 5-phosphate.

Belongs to the ThiG family. Homotetramer. Forms heterodimers with either ThiH or ThiS.

It is found in the cytoplasm. The enzyme catalyses [ThiS sulfur-carrier protein]-C-terminal-Gly-aminoethanethioate + 2-iminoacetate + 1-deoxy-D-xylulose 5-phosphate = [ThiS sulfur-carrier protein]-C-terminal Gly-Gly + 2-[(2R,5Z)-2-carboxy-4-methylthiazol-5(2H)-ylidene]ethyl phosphate + 2 H2O + H(+). It participates in cofactor biosynthesis; thiamine diphosphate biosynthesis. In terms of biological role, catalyzes the rearrangement of 1-deoxy-D-xylulose 5-phosphate (DXP) to produce the thiazole phosphate moiety of thiamine. Sulfur is provided by the thiocarboxylate moiety of the carrier protein ThiS. In vitro, sulfur can be provided by H(2)S. In Bacillus cereus (strain G9842), this protein is Thiazole synthase.